A 182-amino-acid polypeptide reads, in one-letter code: Peptidyl-tRNA hydrolase (182 aa).

Tyr-14 serves as a coordination point for tRNA. His-19 (proton acceptor) is an active-site residue. The tRNA site is built by Phe-64, Asn-66, and Asn-112.

It belongs to the PTH family. In terms of assembly, monomer.

It localises to the cytoplasm. The enzyme catalyses an N-acyl-L-alpha-aminoacyl-tRNA + H2O = an N-acyl-L-amino acid + a tRNA + H(+). Its function is as follows. Hydrolyzes ribosome-free peptidyl-tRNAs (with 1 or more amino acids incorporated), which drop off the ribosome during protein synthesis, or as a result of ribosome stalling. In terms of biological role, catalyzes the release of premature peptidyl moieties from peptidyl-tRNA molecules trapped in stalled 50S ribosomal subunits, and thus maintains levels of free tRNAs and 50S ribosomes. The sequence is that of Peptidyl-tRNA hydrolase from Wolbachia sp. subsp. Drosophila simulans (strain wRi).